Reading from the N-terminus, the 200-residue chain is 3-isopropylmalate dehydratase small subunit (200 aa).

The protein belongs to the LeuD family. LeuD type 1 subfamily. As to quaternary structure, heterodimer of LeuC and LeuD.

It catalyses the reaction (2R,3S)-3-isopropylmalate = (2S)-2-isopropylmalate. The protein operates within amino-acid biosynthesis; L-leucine biosynthesis; L-leucine from 3-methyl-2-oxobutanoate: step 2/4. Its function is as follows. Catalyzes the isomerization between 2-isopropylmalate and 3-isopropylmalate, via the formation of 2-isopropylmaleate. The polypeptide is 3-isopropylmalate dehydratase small subunit (Vibrio parahaemolyticus serotype O3:K6 (strain RIMD 2210633)).